The sequence spans 215 residues: Reticulon-like protein B14 (215 aa).

Positions 31–211 constitute a Reticulon domain; the sequence is FADIMFWKNK…NKIPKAQAKT (181 aa). Transmembrane regions (helical) follow at residues 41–61, 62–82, and 141–161; these read KESGTILGVFTLIWFLFEVVE, YPFITFLCQILLLFIFIFLIW, and LWILSVVGNYFSSLTLLYIVF.

It localises to the endoplasmic reticulum membrane. The protein is Reticulon-like protein B14 (RTNLB14) of Arabidopsis thaliana (Mouse-ear cress).